Consider the following 135-residue polypeptide: MAEKFDHLEEHLEKFVENIRQLGIIVSDFQPSSQAGLNQKLNFIVTGLQDIDKCRQQLHDITVPLEVFEYIDQGRNPQLYTKECLERALAKNEQVKGKIDTMKKFKSLLIQELSKVFPEDMAKYRSIRGEDHPPS.

The protein belongs to the Mediator complex subunit 10 family. Component of the Mediator complex, which is composed of MED1, MED4, MED6, MED7, MED8, MED9, MED10, MED11, MED12, MED13, MED13L, MED14, MED15, MED16, MED17, MED18, MED19, MED20, MED21, MED22, MED23, MED24, MED25, MED26, MED27, MED29, MED30, MED31, CCNC, CDK8 and CDC2L6/CDK11. The MED12, MED13, CCNC and CDK8 subunits form a distinct module termed the CDK8 module. Mediator containing the CDK8 module is less active than Mediator lacking this module in supporting transcriptional activation. Individual preparations of the Mediator complex lacking one or more distinct subunits have been variously termed ARC, CRSP, DRIP, PC2, SMCC and TRAP.

Its subcellular location is the nucleus. Component of the Mediator complex, a coactivator involved in the regulated transcription of nearly all RNA polymerase II-dependent genes. Mediator functions as a bridge to convey information from gene-specific regulatory proteins to the basal RNA polymerase II transcription machinery. Mediator is recruited to promoters by direct interactions with regulatory proteins and serves as a scaffold for the assembly of a functional preinitiation complex with RNA polymerase II and the general transcription factors. The sequence is that of Mediator of RNA polymerase II transcription subunit 10 (MED10) from Homo sapiens (Human).